The chain runs to 640 residues: Zinc finger and BTB domain-containing protein 22 (640 aa).

In terms of domain architecture, BTB spans 57 to 121 (CDVSIRVQGR…AYTGRLSMAA (65 aa)). 3 disordered regions span residues 191-244 (RSHA…PVFP), 308-327 (PAPA…EEED), and 332-482 (CEDD…GGTG). Positions 192 to 210 (SHASSRASENQSPSSSNYF) are enriched in polar residues. Ser203 carries the phosphoserine modification. The segment covering 318 to 327 (PDLEEDEEED) has biased composition (acidic residues). Residues 431 to 442 (SSSSSSSSSSSS) are compositionally biased toward low complexity. Residues 469–482 (GMPGGPGGTPGGTG) show a composition bias toward gly residues. A C2H2-type 1; atypical zinc finger spans residues 490–511 (FLCHCGKAFSHKSMRDRHVNMH). 2 C2H2-type zinc fingers span residues 517 to 539 (FDCP…MKTH) and 545 to 571 (YECG…ERRH). The disordered stretch occupies residues 571 to 640 (HRLVGGGGGG…MGFGGGGGTN (70 aa)). Positions 574–588 (VGGGGGGGPGPGGPT) are enriched in gly residues.

Belongs to the krueppel C2H2-type zinc-finger protein family.

It is found in the nucleus. Its function is as follows. May be involved in transcriptional regulation. The protein is Zinc finger and BTB domain-containing protein 22 (ZBTB22) of Canis lupus familiaris (Dog).